The following is a 228-amino-acid chain: Growth arrest-specific protein 1 homolog (228 aa).

An N-terminal signal peptide occupies residues 1–17 (MRRVILPLVMTVTLCLA). N-linked (GlcNAc...) asparagine glycans are attached at residues Asn-143 and Asn-156. Residue Asp-205 is the site of GPI-anchor amidated aspartate attachment. Positions 206-228 (SSVGHGFNILSAISVYLLTVLVF) are cleaved as a propeptide — removed in mature form.

Pharynx muscle cells from its early formation, in the two-fold embryo, until the adult stage.

The protein resides in the cell membrane. Its function is as follows. Role in pharynx function or development. The chain is Growth arrest-specific protein 1 homolog (phg-1) from Caenorhabditis elegans.